Consider the following 156-residue polypeptide: Small ribosomal subunit protein uS7 (156 aa).

Belongs to the universal ribosomal protein uS7 family. In terms of assembly, part of the 30S ribosomal subunit. Contacts proteins S9 and S11.

One of the primary rRNA binding proteins, it binds directly to 16S rRNA where it nucleates assembly of the head domain of the 30S subunit. Is located at the subunit interface close to the decoding center, probably blocks exit of the E-site tRNA. This Anaeromyxobacter dehalogenans (strain 2CP-1 / ATCC BAA-258) protein is Small ribosomal subunit protein uS7.